Reading from the N-terminus, the 341-residue chain is MIEFRQVSKSFHKKKQTIDALKDVSFTVNRNDIFGVIGYSGAGKSTLVRLVNHLEAASNGQVIVDAHDITNYSDKMMRDIKKDIGMIFQHFNLLNSATVFKNVAMPLILSKKSKTEIKQRVTEMLEFVGLSDKKDQFPDELSGGQKQRVAIARALVTNPKILLCDEATSALDPSTTASILTLLKNVNQTFGITIMMITHEMRVIKDICNRVAVMEKGQVVETGTVKEVFSHPKTTIAQNFVSTVIQTEPSTSLIRRLNDEQVGDFKDYKIFVEETQVTQPIINDLIQICGREVKILFSSMSEIQGNTVCYMWLRFNMDQQFDDTAINQYFKEKNIQFEEVH.

One can recognise an ABC transporter domain in the interval 2–241 (IEFRQVSKSF…PKTTIAQNFV (240 aa)). Residue 38-45 (GYSGAGKS) participates in ATP binding.

Belongs to the ABC transporter superfamily. Methionine importer (TC 3.A.1.24) family. In terms of assembly, the complex is composed of two ATP-binding proteins (MetN), two transmembrane proteins (MetI) and a solute-binding protein (MetQ).

The protein localises to the cell membrane. It carries out the reaction L-methionine(out) + ATP + H2O = L-methionine(in) + ADP + phosphate + H(+). The enzyme catalyses D-methionine(out) + ATP + H2O = D-methionine(in) + ADP + phosphate + H(+). Part of the ABC transporter complex MetNIQ involved in methionine import. Responsible for energy coupling to the transport system. The chain is Methionine import ATP-binding protein MetN 1 from Staphylococcus aureus (strain bovine RF122 / ET3-1).